We begin with the raw amino-acid sequence, 207 residues long: Holliday junction branch migration complex subunit RuvA (207 aa).

A domain I region spans residues 1 to 64; the sequence is MIGRLTGILA…ETSQQLFGFS (64 aa). The segment at 65-142 is domain II; that stretch reads SQQDRELFRM…ALDTTPSEHS (78 aa). The flexible linker stretch occupies residues 143 to 157; sequence PTGEGAGIVRVDPVI. Residues 158 to 207 form a domain III region; it reads NTNVIIADAESALIGLGYKPTEAAKAVSAAYNDTITTSEDLIRAALKGMI.

Belongs to the RuvA family. As to quaternary structure, homotetramer. Forms an RuvA(8)-RuvB(12)-Holliday junction (HJ) complex. HJ DNA is sandwiched between 2 RuvA tetramers; dsDNA enters through RuvA and exits via RuvB. An RuvB hexamer assembles on each DNA strand where it exits the tetramer. Each RuvB hexamer is contacted by two RuvA subunits (via domain III) on 2 adjacent RuvB subunits; this complex drives branch migration. In the full resolvosome a probable DNA-RuvA(4)-RuvB(12)-RuvC(2) complex forms which resolves the HJ.

The protein localises to the cytoplasm. In terms of biological role, the RuvA-RuvB-RuvC complex processes Holliday junction (HJ) DNA during genetic recombination and DNA repair, while the RuvA-RuvB complex plays an important role in the rescue of blocked DNA replication forks via replication fork reversal (RFR). RuvA specifically binds to HJ cruciform DNA, conferring on it an open structure. The RuvB hexamer acts as an ATP-dependent pump, pulling dsDNA into and through the RuvAB complex. HJ branch migration allows RuvC to scan DNA until it finds its consensus sequence, where it cleaves and resolves the cruciform DNA. In Saccharophagus degradans (strain 2-40 / ATCC 43961 / DSM 17024), this protein is Holliday junction branch migration complex subunit RuvA.